The chain runs to 408 residues: Branched-chain amino acid aminotransferase 2, chloroplastic (408 aa).

The transit peptide at 1 to 58 (MDCAAALLPGFHPNYLLCPSRHFSSLLPKTDLSSPLKFQLQNKQLSLASSHGFSPVIC) directs the protein to the chloroplast. Residue Arg152 coordinates pyridoxal 5'-phosphate. Lys254 serves as the catalytic Proton acceptor. N6-(pyridoxal phosphate)lysine is present on Lys254. A pyridoxal 5'-phosphate-binding site is contributed by Glu290.

This sequence belongs to the class-IV pyridoxal-phosphate-dependent aminotransferase family. Pyridoxal 5'-phosphate is required as a cofactor. As to expression, expressed in lupulin glands and leaves.

It localises to the plastid. The protein localises to the chloroplast. The enzyme catalyses L-isoleucine + 2-oxoglutarate = (S)-3-methyl-2-oxopentanoate + L-glutamate. The catalysed reaction is L-leucine + 2-oxoglutarate = 4-methyl-2-oxopentanoate + L-glutamate. It carries out the reaction L-valine + 2-oxoglutarate = 3-methyl-2-oxobutanoate + L-glutamate. The protein operates within amino-acid biosynthesis; L-isoleucine biosynthesis; L-isoleucine from 2-oxobutanoate: step 4/4. It functions in the pathway amino-acid biosynthesis; L-leucine biosynthesis; L-leucine from 3-methyl-2-oxobutanoate: step 4/4. Its pathway is amino-acid biosynthesis; L-valine biosynthesis; L-valine from pyruvate: step 4/4. Functionally, converts 2-oxo acids to branched-chain amino acids. Shows no kinetic preferences corresponding to anabolic or catabolic functions, but likely involved in BCAA biosynthesis. The protein is Branched-chain amino acid aminotransferase 2, chloroplastic of Humulus lupulus (European hop).